Here is a 195-residue protein sequence, read N- to C-terminus: E3 ubiquitin-protein ligase ZNRF1 (195 aa).

The segment covering 1 to 10 (MGGKQSSASR) has biased composition (polar residues). The interval 1 to 37 (MGGKQSSASRSRAPFPGVSSDDSAVPPSSNFGHFRGG) is disordered. A lipid anchor (N-myristoyl glycine) is attached at Gly2. A compositionally biased stretch (low complexity) spans 18–29 (VSSDDSAVPPSS). Residues 152-193 (CVICLEELSQGDTIARLPCLCIYHKSCIDSWFEVNRCCPEHP) form an RING-type; atypical zinc finger.

The protein resides in the endosome. Its subcellular location is the lysosome. It is found in the membrane. The enzyme catalyses S-ubiquitinyl-[E2 ubiquitin-conjugating enzyme]-L-cysteine + [acceptor protein]-L-lysine = [E2 ubiquitin-conjugating enzyme]-L-cysteine + N(6)-ubiquitinyl-[acceptor protein]-L-lysine.. The protein operates within protein modification; protein ubiquitination. E3 ubiquitin-protein ligase that plays a role in neuron cells differentiation. Plays a role in the establishment and maintenance of neuronal transmission and plasticity. The polypeptide is E3 ubiquitin-protein ligase ZNRF1 (znrf1) (Xenopus laevis (African clawed frog)).